The chain runs to 104 residues: Large ribosomal subunit protein bL21 (104 aa).

It belongs to the bacterial ribosomal protein bL21 family. As to quaternary structure, part of the 50S ribosomal subunit. Contacts protein L20.

In terms of biological role, this protein binds to 23S rRNA in the presence of protein L20. This chain is Large ribosomal subunit protein bL21, found in Endomicrobium trichonymphae.